The chain runs to 199 residues: Fe/S biogenesis protein NfuA (199 aa).

2 residues coordinate [4Fe-4S] cluster: Cys151 and Cys154.

It belongs to the NfuA family. Homodimer. [4Fe-4S] cluster is required as a cofactor.

In terms of biological role, involved in iron-sulfur cluster biogenesis. Binds a 4Fe-4S cluster, can transfer this cluster to apoproteins, and thereby intervenes in the maturation of Fe/S proteins. Could also act as a scaffold/chaperone for damaged Fe/S proteins. This chain is Fe/S biogenesis protein NfuA, found in Stenotrophomonas maltophilia (strain R551-3).